The chain runs to 689 residues: Choline transporter-like 1 (689 aa).

Residues 23–43 (IFWLVVYILFWIALLVIAVFS) form a helical membrane-spanning segment. Asn-134 is a glycosylation site (N-linked (GlcNAc...) asparagine). Helical transmembrane passes span 199 to 219 (FSDI…SLIF) and 233 to 255 (IISW…VLWW). An N-linked (GlcNAc...) asparagine glycan is attached at Asn-279. A run of 2 helical transmembrane segments spans residues 283–303 (IYVL…VIYY) and 333–353 (VLAF…IVCL). 2 N-linked (GlcNAc...) asparagine glycosylation sites follow: Asn-375 and Asn-389. The next 4 helical transmembrane spans lie at 412-432 (IYII…QLVI), 461-481 (LGSV…RLIL), 562-582 (LVLF…SILM), and 591-611 (FYMA…HIVL).

The protein belongs to the CTL (choline transporter-like) family.

The protein localises to the membrane. This is Choline transporter-like 1 from Aedes aegypti (Yellowfever mosquito).